Here is a 319-residue protein sequence, read N- to C-terminus: Putative peptide permease protein BRA0408/BS1330_II0405 (319 aa).

6 consecutive transmembrane segments (helical) span residues 9 to 29 (LLIG…LLQL), 102 to 122 (LLLM…TGII), 138 to 158 (LALL…LYVF), 182 to 202 (LLRH…ALIM), 242 to 262 (LPVV…AIFI), and 284 to 304 (YPVI…VNIL). An ABC transmembrane type-1 domain is found at 98–305 (IGPTLLLMAA…ACVIIVNILT (208 aa)).

Belongs to the binding-protein-dependent transport system permease family. In terms of assembly, the complex is composed of two ATP-binding proteins (BRA0404 and BRA0405), two transmembrane proteins (BRA0407 and BRA0408) and a solute-binding protein (BRA0409).

It is found in the cell inner membrane. Its function is as follows. Probably part of an ABC transporter complex that could be involved in peptide import. Probably responsible for the translocation of the substrate across the membrane. The chain is Putative peptide permease protein BRA0408/BS1330_II0405 from Brucella suis biovar 1 (strain 1330).